The chain runs to 407 residues: Argininosuccinate synthase (407 aa).

ATP contacts are provided by residues Ala-11–Ser-19 and Ala-38. L-citrulline contacts are provided by Tyr-89 and Ser-94. Gly-119 contributes to the ATP binding site. Positions 121, 125, and 126 each coordinate L-aspartate. Asn-125 is a binding site for L-citrulline. L-citrulline-binding residues include Arg-129, Ser-180, Ser-189, Glu-265, and Tyr-277.

The protein belongs to the argininosuccinate synthase family. Type 1 subfamily. Homotetramer.

The protein localises to the cytoplasm. The enzyme catalyses L-citrulline + L-aspartate + ATP = 2-(N(omega)-L-arginino)succinate + AMP + diphosphate + H(+). The protein operates within amino-acid biosynthesis; L-arginine biosynthesis; L-arginine from L-ornithine and carbamoyl phosphate: step 2/3. The polypeptide is Argininosuccinate synthase (Magnetococcus marinus (strain ATCC BAA-1437 / JCM 17883 / MC-1)).